We begin with the raw amino-acid sequence, 264 residues long: Virulence plasmid protein pGP3-D (264 aa).

The polypeptide is Virulence plasmid protein pGP3-D (Chlamydia trachomatis serovar L2 (strain ATCC VR-902B / DSM 19102 / 434/Bu)).